A 262-amino-acid polypeptide reads, in one-letter code: Glycoprotein gp2 (262 aa).

Positions 1–45 (RRGSPQGGSHTTPHPDRLTPSPDDTYDDDTNHPNGRNNSIEIVPQ) are disordered.

Its subcellular location is the virion membrane. In terms of biological role, virulence factor. The protein is Glycoprotein gp2 of Equus caballus (Horse).